The chain runs to 1010 residues: Retinoblastoma-related protein 3 (1010 aa).

The interval Thr-416–Leu-616 is domain A. The interval Thr-416–Ser-858 is pocket. The interval Ile-617–Glu-727 is spacer. The interval Thr-728–Ser-858 is domain B. Disordered stretches follow at residues Ala-867 to Ser-889 and Gly-986 to Ser-1010.

It belongs to the retinoblastoma protein (RB) family.

It localises to the nucleus. In terms of biological role, regulator of biological processes that recruits a histone deacetylase to control gene transcription. May play a role in the entry into mitosis, negatively regulating the cell proliferation. Formation of stable complexes with geminiviridae replication-associated proteins may create a cellular environment which favors viral DNA replication. The sequence is that of Retinoblastoma-related protein 3 (RBR3) from Zea mays (Maize).